Reading from the N-terminus, the 418-residue chain is Tektin-1 (418 aa).

Coiled-coil stretches lie at residues 21-107, 134-177, 266-308, and 333-384; these read KNQY…TLKE, HELI…DLKD, NGLK…DQEG, and AQYR…NTIY.

The protein belongs to the tektin family. Microtubule inner protein component of sperm flagellar doublet microtubules. Post-translationally, ubiquitinated, leading to its degradation. Deubiquitinated by USP16, promoting its stability. As to expression, predominantly expressed in testis. Expressed in airway epithelial cells.

The protein localises to the cytoplasm. It localises to the cytoskeleton. Its subcellular location is the cilium axoneme. The protein resides in the flagellum axoneme. Functionally, microtubule inner protein (MIP) part of the dynein-decorated doublet microtubules (DMTs) in cilia and flagellar axoneme. Forms filamentous polymers in the walls of ciliary and flagellar microtubules. This Homo sapiens (Human) protein is Tektin-1 (TEKT1).